Here is a 353-residue protein sequence, read N- to C-terminus: Protein RecA (353 aa).

An ATP-binding site is contributed by 73–80 (GPESSGKT).

The protein belongs to the RecA family.

Its subcellular location is the cytoplasm. In terms of biological role, can catalyze the hydrolysis of ATP in the presence of single-stranded DNA, the ATP-dependent uptake of single-stranded DNA by duplex DNA, and the ATP-dependent hybridization of homologous single-stranded DNAs. It interacts with LexA causing its activation and leading to its autocatalytic cleavage. This Bordetella avium (strain 197N) protein is Protein RecA.